A 74-amino-acid chain; its full sequence is Protein SlyX homolog (74 aa).

The protein belongs to the SlyX family.

This Aliivibrio salmonicida (strain LFI1238) (Vibrio salmonicida (strain LFI1238)) protein is Protein SlyX homolog.